The primary structure comprises 250 residues: 5'-nucleotidase SurE (250 aa).

Residues Asp-8, Asp-9, Ser-39, and Asn-95 each coordinate a divalent metal cation.

Belongs to the SurE nucleotidase family. It depends on a divalent metal cation as a cofactor.

It localises to the cytoplasm. The catalysed reaction is a ribonucleoside 5'-phosphate + H2O = a ribonucleoside + phosphate. Nucleotidase that shows phosphatase activity on nucleoside 5'-monophosphates. This is 5'-nucleotidase SurE from Cupriavidus taiwanensis (strain DSM 17343 / BCRC 17206 / CCUG 44338 / CIP 107171 / LMG 19424 / R1) (Ralstonia taiwanensis (strain LMG 19424)).